Consider the following 217-residue polypeptide: Probable transaldolase (217 aa).

The active-site Schiff-base intermediate with substrate is Lys-83.

It belongs to the transaldolase family. Type 3B subfamily.

Its subcellular location is the cytoplasm. The catalysed reaction is D-sedoheptulose 7-phosphate + D-glyceraldehyde 3-phosphate = D-erythrose 4-phosphate + beta-D-fructose 6-phosphate. The protein operates within carbohydrate degradation; pentose phosphate pathway; D-glyceraldehyde 3-phosphate and beta-D-fructose 6-phosphate from D-ribose 5-phosphate and D-xylulose 5-phosphate (non-oxidative stage): step 2/3. Its function is as follows. Transaldolase is important for the balance of metabolites in the pentose-phosphate pathway. This chain is Probable transaldolase, found in Novosphingobium aromaticivorans (strain ATCC 700278 / DSM 12444 / CCUG 56034 / CIP 105152 / NBRC 16084 / F199).